Reading from the N-terminus, the 619-residue chain is ATP-dependent RNA helicase dbp9 (619 aa).

The disordered stretch occupies residues 1 to 30; sequence MKRKLDANDVPSTEVAEEKETKDADNTDFE. Positions 16 to 25 are enriched in basic and acidic residues; it reads AEEKETKDAD. The short motif at 27-55 is the Q motif element; the sequence is TDFESLNLDPRLRQALIREQFTKPTPVQS. The Helicase ATP-binding domain maps to 58 to 236; it reads IPLALEGKDI…GLFCRSPVIL (179 aa). 71-78 contributes to the ATP binding site; that stretch reads AKTGSGKT. The DEAD box signature appears at 184 to 187; that stretch reads DEAD. The 238-residue stretch at 247–484 folds into the Helicase C-terminal domain; sequence GISQFVVRCA…EVKPYHFEMK (238 aa). Disordered regions lie at residues 339-390 and 582-619; these read SRTS…GKAK and GDNR…RGRK. Residues 345 to 362 show a composition bias toward basic and acidic residues; sequence KSKEATDGDDEAKDKMGS. The segment covering 587–604 has biased composition (basic residues); sequence RKAREKNRGKGKGRKPSG.

It belongs to the DEAD box helicase family. DDX56/DBP9 subfamily.

The protein resides in the nucleus. It is found in the nucleolus. It carries out the reaction ATP + H2O = ADP + phosphate + H(+). Functionally, ATP-binding RNA helicase involved in the biogenesis of 60S ribosomal subunits and is required for the normal formation of 25S and 5.8S rRNAs. In Neosartorya fischeri (strain ATCC 1020 / DSM 3700 / CBS 544.65 / FGSC A1164 / JCM 1740 / NRRL 181 / WB 181) (Aspergillus fischerianus), this protein is ATP-dependent RNA helicase dbp9 (dbp9).